A 35-amino-acid polypeptide reads, in one-letter code: Photosystem II reaction center protein T (35 aa).

The helical transmembrane segment at 3–23 threads the bilayer; it reads ALVYTFLLVSTLGILFFAIFF.

The protein belongs to the PsbT family. In terms of assembly, PSII is composed of 1 copy each of membrane proteins PsbA, PsbB, PsbC, PsbD, PsbE, PsbF, PsbH, PsbI, PsbJ, PsbK, PsbL, PsbM, PsbT, PsbY, PsbZ, Psb30/Ycf12, at least 3 peripheral proteins of the oxygen-evolving complex and a large number of cofactors. It forms dimeric complexes.

It is found in the plastid. The protein resides in the chloroplast thylakoid membrane. Its function is as follows. Found at the monomer-monomer interface of the photosystem II (PS II) dimer, plays a role in assembly and dimerization of PSII. PSII is a light-driven water plastoquinone oxidoreductase, using light energy to abstract electrons from H(2)O, generating a proton gradient subsequently used for ATP formation. This chain is Photosystem II reaction center protein T, found in Gnetum gnemon (Spanish joint-fir).